A 282-amino-acid polypeptide reads, in one-letter code: Bis(5'-nucleosyl)-tetraphosphatase, symmetrical (282 aa).

Belongs to the Ap4A hydrolase family.

The catalysed reaction is P(1),P(4)-bis(5'-adenosyl) tetraphosphate + H2O = 2 ADP + 2 H(+). In terms of biological role, hydrolyzes diadenosine 5',5'''-P1,P4-tetraphosphate to yield ADP. This Burkholderia pseudomallei (strain 668) protein is Bis(5'-nucleosyl)-tetraphosphatase, symmetrical.